Here is a 437-residue protein sequence, read N- to C-terminus: UDP-N-acetylmuramate--L-alanine ligase (437 aa).

114–120 (GTHGKTS) provides a ligand contact to ATP.

This sequence belongs to the MurCDEF family.

It is found in the cytoplasm. It carries out the reaction UDP-N-acetyl-alpha-D-muramate + L-alanine + ATP = UDP-N-acetyl-alpha-D-muramoyl-L-alanine + ADP + phosphate + H(+). It functions in the pathway cell wall biogenesis; peptidoglycan biosynthesis. In terms of biological role, cell wall formation. The sequence is that of UDP-N-acetylmuramate--L-alanine ligase from Lactobacillus gasseri (strain ATCC 33323 / DSM 20243 / BCRC 14619 / CIP 102991 / JCM 1131 / KCTC 3163 / NCIMB 11718 / NCTC 13722 / AM63).